Reading from the N-terminus, the 352-residue chain is Histidinol-phosphate aminotransferase (352 aa).

Position 221 is an N6-(pyridoxal phosphate)lysine (lysine 221).

It belongs to the class-II pyridoxal-phosphate-dependent aminotransferase family. Histidinol-phosphate aminotransferase subfamily. As to quaternary structure, homodimer. It depends on pyridoxal 5'-phosphate as a cofactor.

It catalyses the reaction L-histidinol phosphate + 2-oxoglutarate = 3-(imidazol-4-yl)-2-oxopropyl phosphate + L-glutamate. It participates in amino-acid biosynthesis; L-histidine biosynthesis; L-histidine from 5-phospho-alpha-D-ribose 1-diphosphate: step 7/9. This Staphylococcus aureus (strain MSSA476) protein is Histidinol-phosphate aminotransferase.